The primary structure comprises 168 residues: tRNA-splicing endonuclease subunit Sen15 (168 aa).

The tract at residues 1–32 (MEERSDSEPTPGCSGPGPAPVRDGGGAHTWAP) is disordered. Residues serine 7 and serine 165 each carry the phosphoserine modification.

It belongs to the SEN15 family. Homodimer. tRNA splicing endonuclease is a heterotetramer composed of TSEN2, TSEN15, TSEN34/LENG5 and TSEN54. tRNA splicing endonuclease complex also contains proteins of the pre-mRNA 3' end processing machinery such as CLP1, CPSF1, CPSF4 and CSTF2.

It is found in the nucleus. It localises to the nucleolus. Its function is as follows. Non-catalytic subunit of the tRNA-splicing endonuclease complex, a complex responsible for identification and cleavage of the splice sites in pre-tRNA. It cleaves pre-tRNA at the 5' and 3' splice sites to release the intron. The products are an intron and two tRNA half-molecules bearing 2',3' cyclic phosphate and 5'-OH termini. There are no conserved sequences at the splice sites, but the intron is invariably located at the same site in the gene, placing the splice sites an invariant distance from the constant structural features of the tRNA body. The tRNA splicing endonuclease is also involved in mRNA processing via its association with pre-mRNA 3'-end processing factors, establishing a link between pre-tRNA splicing and pre-mRNA 3'-end formation, suggesting that the endonuclease subunits function in multiple RNA-processing events. The chain is tRNA-splicing endonuclease subunit Sen15 (Tsen15) from Mus musculus (Mouse).